The chain runs to 178 residues: Mediator of RNA polymerase II transcription subunit 28 (178 aa).

A disordered region spans residues 1–44 (MAAPLGGMFSGQPPGPPQAPPGLPGQASLLQAAPGAPRPSSSTL). Residues 13 to 23 (PPGPPQAPPGL) show a composition bias toward pro residues. The stretch at 109-145 (QVIKEDVSELRNELQRKDALVQKHLTKLRHWQQVLED) forms a coiled coil.

It belongs to the Mediator complex subunit 28 family. As to quaternary structure, component of the Mediator complex, which is composed of MED1, MED4, MED6, MED7, MED8, MED9, MED10, MED11, MED12, MED13, MED13L, MED14, MED15, MED16, MED17, MED18, MED19, MED20, MED21, MED22, MED23, MED24, MED25, MED26, MED27, MED29, MED30, MED31, CCNC, CDK8 and CDC2L6/CDK11. The MED12, MED13, CCNC and CDK8 subunits form a distinct module termed the CDK8 module. Mediator containing the CDK8 module is less active than Mediator lacking this module in supporting transcriptional activation. Individual preparations of the Mediator complex lacking one or more distinct subunits have been variously termed ARC, CRSP, DRIP, PC2, SMCC and TRAP. Forms a ternary complex with NF2/merlin and GRB2. Binds to actin. Widely expressed. Highly expressed in vascular tissues such as placenta, testis and liver.

The protein localises to the nucleus. Its subcellular location is the cytoplasm. The protein resides in the membrane. Functionally, component of the Mediator complex, a coactivator involved in the regulated transcription of nearly all RNA polymerase II-dependent genes. Mediator functions as a bridge to convey information from gene-specific regulatory proteins to the basal RNA polymerase II transcription machinery. Mediator is recruited to promoters by direct interactions with regulatory proteins and serves as a scaffold for the assembly of a functional preinitiation complex with RNA polymerase II and the general transcription factors. May be part of a complex containing NF2/merlin that participates in cellular signaling to the actin cytoskeleton downstream of tyrosine kinase signaling pathways. The sequence is that of Mediator of RNA polymerase II transcription subunit 28 (MED28) from Homo sapiens (Human).